Here is a 335-residue protein sequence, read N- to C-terminus: NADH-quinone oxidoreductase subunit H (335 aa).

8 consecutive transmembrane segments (helical) span residues 11–31, 81–101, 114–134, 154–174, 187–207, 238–258, 270–290, and 307–327; these read VILT…CGAL, VIFT…FVVI, IGLL…LFAG, VSYE…VGSF, LWFI…GVAV, FFVG…TLFF, QLSF…FILL, and WKFC…IVLY.

The protein belongs to the complex I subunit 1 family. As to quaternary structure, NDH-1 is composed of 13 different subunits. Subunits NuoA, H, J, K, L, M, N constitute the membrane sector of the complex.

It localises to the cell inner membrane. It carries out the reaction a quinone + NADH + 5 H(+)(in) = a quinol + NAD(+) + 4 H(+)(out). Its function is as follows. NDH-1 shuttles electrons from NADH, via FMN and iron-sulfur (Fe-S) centers, to quinones in the respiratory chain. The immediate electron acceptor for the enzyme in this species is believed to be ubiquinone. Couples the redox reaction to proton translocation (for every two electrons transferred, four hydrogen ions are translocated across the cytoplasmic membrane), and thus conserves the redox energy in a proton gradient. This subunit may bind ubiquinone. The polypeptide is NADH-quinone oxidoreductase subunit H (Pseudomonas putida (strain ATCC 700007 / DSM 6899 / JCM 31910 / BCRC 17059 / LMG 24140 / F1)).